The following is a 199-amino-acid chain: Golgi to ER traffic protein 1 (199 aa).

The Lumenal portion of the chain corresponds to 1 to 11 (MLLPDLHPYTI). Residues 12 to 31 (LLSIFIVLLLKQLVASIGKS) form a helical membrane-spanning segment. The Cytoplasmic portion of the chain corresponds to 32–115 (TIKEFVWLVY…SIDKVSNALL (84 aa)). A coiled-coil region spans residues 66-116 (EKRAISAQDEYAKWTKLNRQADKLSAELQKLNQEIQQQKASIDKVSNALLL). Residues 116 to 136 (LVLTTLPIWVARVLYRNTHLF) traverse the membrane as a helical segment. Residues 137–160 (YIRQGIFPKYVEWVLALPFLPNGA) lie on the Lumenal side of the membrane. A helical membrane pass occupies residues 161 to 177 (VGLTIWMFAVNSVVSNF). The Cytoplasmic portion of the chain corresponds to 178 to 199 (AFLVSFPFAKKVSKPVRDTKIE).

This sequence belongs to the WRB/GET1 family. In terms of assembly, component of the Golgi to ER traffic (GET) complex, which is composed of GET1, GET2 and GET3. Within the complex, GET1 and GET2 form a heterotetramer which is stabilized by phosphatidylinositol binding and which binds to the GET3 homodimer.

The protein resides in the endoplasmic reticulum membrane. It localises to the golgi apparatus membrane. In terms of biological role, required for the post-translational delivery of tail-anchored (TA) proteins to the endoplasmic reticulum. Together with GET2, acts as a membrane receptor for soluble GET3, which recognizes and selectively binds the transmembrane domain of TA proteins in the cytosol. The GET complex cooperates with the HDEL receptor ERD2 to mediate the ATP-dependent retrieval of resident ER proteins that contain a C-terminal H-D-E-L retention signal from the Golgi to the ER. This is Golgi to ER traffic protein 1 from Candida dubliniensis (strain CD36 / ATCC MYA-646 / CBS 7987 / NCPF 3949 / NRRL Y-17841) (Yeast).